Reading from the N-terminus, the 369-residue chain is Protein RecA (369 aa).

Position 77–84 (77–84 (GPESSGKT)) interacts with ATP.

The protein belongs to the RecA family.

It is found in the cytoplasm. Can catalyze the hydrolysis of ATP in the presence of single-stranded DNA, the ATP-dependent uptake of single-stranded DNA by duplex DNA, and the ATP-dependent hybridization of homologous single-stranded DNAs. It interacts with LexA causing its activation and leading to its autocatalytic cleavage. The sequence is that of Protein RecA from Corynebacterium pseudotuberculosis (strain C231).